The following is a 494-amino-acid chain: Glutamyl-tRNA(Gln) amidotransferase subunit A (494 aa).

Residues Lys-79 and Ser-154 each act as charge relay system in the active site. Catalysis depends on Ser-178, which acts as the Acyl-ester intermediate.

This sequence belongs to the amidase family. GatA subfamily. Heterotrimer of A, B and C subunits.

It catalyses the reaction L-glutamyl-tRNA(Gln) + L-glutamine + ATP + H2O = L-glutaminyl-tRNA(Gln) + L-glutamate + ADP + phosphate + H(+). In terms of biological role, allows the formation of correctly charged Gln-tRNA(Gln) through the transamidation of misacylated Glu-tRNA(Gln) in organisms which lack glutaminyl-tRNA synthetase. The reaction takes place in the presence of glutamine and ATP through an activated gamma-phospho-Glu-tRNA(Gln). This Clostridium kluyveri (strain NBRC 12016) protein is Glutamyl-tRNA(Gln) amidotransferase subunit A.